A 755-amino-acid chain; its full sequence is Cellulose synthase-like protein B4 (755 aa).

2 helical membrane-spanning segments follow: residues 24–44 (AVDLTILGLLLSLLLYRILHV) and 49–69 (TVWIVAFLCETCFTFVWLLIT). Residues Asp-136 and Asp-461 contribute to the active site. 6 helical membrane passes run 533 to 556 (AYLYVFSWGLRSIPELFYCLLPAY), 569 to 589 (VYLGIIITLVGIHCLYTLWEF), 615 to 635 (LFSVLDVILKLLGISKTVFIV), 674 to 694 (FLPGTFIVLVNLAALAGCLVG), 702 to 722 (GSGLAEACGCILVVILFLPFL), and 733 to 753 (IPFSTLSKAAFLAALFVVLSV).

The protein belongs to the glycosyltransferase 2 family. Plant cellulose synthase-like B subfamily.

It is found in the golgi apparatus membrane. Functionally, thought to be a Golgi-localized beta-glycan synthase that polymerize the backbones of noncellulosic polysaccharides (hemicelluloses) of plant cell wall. This chain is Cellulose synthase-like protein B4 (CSLB4), found in Arabidopsis thaliana (Mouse-ear cress).